Consider the following 141-residue polypeptide: Large ribosomal subunit protein uL16 (141 aa).

Belongs to the universal ribosomal protein uL16 family. In terms of assembly, part of the 50S ribosomal subunit.

Its function is as follows. Binds 23S rRNA and is also seen to make contacts with the A and possibly P site tRNAs. The protein is Large ribosomal subunit protein uL16 of Campylobacter lari (strain RM2100 / D67 / ATCC BAA-1060).